The primary structure comprises 340 residues: N-acetyl-gamma-glutamyl-phosphate reductase (340 aa).

The active site involves Cys-146.

Belongs to the NAGSA dehydrogenase family. Type 1 subfamily.

The protein resides in the cytoplasm. The enzyme catalyses N-acetyl-L-glutamate 5-semialdehyde + phosphate + NADP(+) = N-acetyl-L-glutamyl 5-phosphate + NADPH + H(+). It participates in amino-acid biosynthesis; L-arginine biosynthesis; N(2)-acetyl-L-ornithine from L-glutamate: step 3/4. In terms of biological role, catalyzes the NADPH-dependent reduction of N-acetyl-5-glutamyl phosphate to yield N-acetyl-L-glutamate 5-semialdehyde. The polypeptide is N-acetyl-gamma-glutamyl-phosphate reductase (Streptococcus gordonii (strain Challis / ATCC 35105 / BCRC 15272 / CH1 / DL1 / V288)).